The chain runs to 589 residues: Sulfite reductase [NADPH] hemoprotein beta-component (589 aa).

[4Fe-4S] cluster is bound by residues cysteine 443, cysteine 449, cysteine 488, and cysteine 492. Cysteine 492 provides a ligand contact to siroheme.

Belongs to the nitrite and sulfite reductase 4Fe-4S domain family. Alpha(8)-beta(8). The alpha component is a flavoprotein, the beta component is a hemoprotein. The cofactor is siroheme. [4Fe-4S] cluster is required as a cofactor.

It carries out the reaction hydrogen sulfide + 3 NADP(+) + 3 H2O = sulfite + 3 NADPH + 4 H(+). It participates in sulfur metabolism; hydrogen sulfide biosynthesis; hydrogen sulfide from sulfite (NADPH route): step 1/1. Functionally, component of the sulfite reductase complex that catalyzes the 6-electron reduction of sulfite to sulfide. This is one of several activities required for the biosynthesis of L-cysteine from sulfate. This is Sulfite reductase [NADPH] hemoprotein beta-component from Neisseria meningitidis serogroup C / serotype 2a (strain ATCC 700532 / DSM 15464 / FAM18).